The sequence spans 91 residues: Methanol dehydrogenase [cytochrome c] subunit 2 (91 aa).

Residues 1–22 (MKHVLTLLALASVFAVSNQALA) form the signal peptide. Cysteines 28 and 34 form a disulfide.

This sequence belongs to the methanol dehydrogenase subunit 2 family. As to quaternary structure, heterotetramer composed of 2 alpha and 2 beta subunits.

The protein resides in the cell inner membrane. The catalysed reaction is 2 Fe(III)-[cytochrome cL] + a primary alcohol = 2 Fe(II)-[cytochrome cL] + an aldehyde + 2 H(+). Functionally, catalyzes the oxidation of primary alcohols including methanol. The sequence is that of Methanol dehydrogenase [cytochrome c] subunit 2 (moxI) from Methylophilus methylotrophus (Bacterium W3A1).